We begin with the raw amino-acid sequence, 540 residues long: Chaperonin GroEL 3 (540 aa).

ATP-binding positions include 30-33, Lys-51, 87-91, Gly-415, 479-481, and Asp-495; these read TLGP, DGTTT, and NAA.

It belongs to the chaperonin (HSP60) family. Forms a cylinder of 14 subunits composed of two heptameric rings stacked back-to-back. Interacts with the co-chaperonin GroES.

The protein localises to the cytoplasm. It catalyses the reaction ATP + H2O + a folded polypeptide = ADP + phosphate + an unfolded polypeptide.. Functionally, together with its co-chaperonin GroES, plays an essential role in assisting protein folding. The GroEL-GroES system forms a nano-cage that allows encapsulation of the non-native substrate proteins and provides a physical environment optimized to promote and accelerate protein folding. The sequence is that of Chaperonin GroEL 3 from Burkholderia ambifaria (strain ATCC BAA-244 / DSM 16087 / CCUG 44356 / LMG 19182 / AMMD) (Burkholderia cepacia (strain AMMD)).